The sequence spans 527 residues: Probable bifunctional tRNA threonylcarbamoyladenosine biosynthesis protein (527 aa).

Positions 1–323 (MPDIMPDDGL…YRADEVEVAW (323 aa)) are kae1. Fe cation is bound by residues histidine 110, histidine 114, and tyrosine 131. L-threonylcarbamoyladenylate contacts are provided by residues 131-135 (YASGA), aspartate 163, glycine 176, glutamate 180, and asparagine 256. Aspartate 284 contacts Fe cation. Residues 333–527 (IGPHEGGVAR…HEVELRGRYL (195 aa)) form the Protein kinase domain. ATP-binding positions include 340–348 (VARGAEAVV) and lysine 357. The active-site Proton acceptor; for kinase activity is the aspartate 444.

This sequence in the N-terminal section; belongs to the KAE1 / TsaD family. The protein in the C-terminal section; belongs to the protein kinase superfamily. Tyr protein kinase family. BUD32 subfamily. In terms of assembly, component of the KEOPS complex that consists of Kae1, Bud32, Cgi121 and Pcc1; the whole complex dimerizes. The cofactor is Fe(2+).

Its subcellular location is the cytoplasm. It carries out the reaction L-seryl-[protein] + ATP = O-phospho-L-seryl-[protein] + ADP + H(+). The catalysed reaction is L-threonyl-[protein] + ATP = O-phospho-L-threonyl-[protein] + ADP + H(+). It catalyses the reaction L-threonylcarbamoyladenylate + adenosine(37) in tRNA = N(6)-L-threonylcarbamoyladenosine(37) in tRNA + AMP + H(+). Functionally, required for the formation of a threonylcarbamoyl group on adenosine at position 37 (t(6)A37) in tRNAs that read codons beginning with adenine. Is a component of the KEOPS complex that is probably involved in the transfer of the threonylcarbamoyl moiety of threonylcarbamoyl-AMP (TC-AMP) to the N6 group of A37. The Kae1 domain likely plays a direct catalytic role in this reaction. The Bud32 domain probably displays kinase activity that regulates Kae1 function. This Methanoculleus marisnigri (strain ATCC 35101 / DSM 1498 / JR1) protein is Probable bifunctional tRNA threonylcarbamoyladenosine biosynthesis protein.